Reading from the N-terminus, the 104-residue chain is Nucleoid-associated protein Dtur_0258 (104 aa).

Residues 84–104 (EKSAEKMGSLTDGLPLPPGLF) are disordered.

This sequence belongs to the YbaB/EbfC family. Homodimer.

It localises to the cytoplasm. The protein resides in the nucleoid. Functionally, binds to DNA and alters its conformation. May be involved in regulation of gene expression, nucleoid organization and DNA protection. The polypeptide is Nucleoid-associated protein Dtur_0258 (Dictyoglomus turgidum (strain DSM 6724 / Z-1310)).